We begin with the raw amino-acid sequence, 202 residues long: Superoxide dismutase [Mn] (202 aa).

Position 27 (His27) interacts with Mn(2+). Phosphothreonine is present on residues Thr34 and Thr70. Mn(2+) is bound by residues His82, Asp164, and His168.

Belongs to the iron/manganese superoxide dismutase family. Homodimer; under aerobic conditions. Under anaerobic conditions it is a component of the so-called 'green protein' complex (GPC), which consists of at least two components, SodA and a nucleoside diphosphate kinase (NDK). The cofactor is Mn(2+).

The protein resides in the cytoplasm. It catalyses the reaction 2 superoxide + 2 H(+) = H2O2 + O2. Destroys superoxide anion radicals which are normally produced within the cells and which are toxic to biological systems. Active only in homodimeric state. The polypeptide is Superoxide dismutase [Mn] (sodA) (Virgibacillus halodenitrificans (Bacillus halodenitrificans)).